We begin with the raw amino-acid sequence, 241 residues long: Proteasome subunit alpha type-5 (241 aa).

Met1 is modified (N-acetylmethionine). A Phosphoserine modification is found at Ser16. At Thr55 the chain carries Phosphothreonine. Phosphoserine occurs at positions 56 and 63. Ser198 carries O-linked (GlcNAc) serine glycosylation.

The protein belongs to the peptidase T1A family. The 26S proteasome consists of a 20S proteasome core and two 19S regulatory subunits. The 20S proteasome core is a barrel-shaped complex made of 28 subunits that are arranged in four stacked rings. The two outer rings are each formed by seven alpha subunits, and the two inner rings are formed by seven beta subunits. The proteolytic activity is exerted by three beta-subunits PSMB5, PSMB6 and PSMB7. PSMA5 interacts directly with the PSMG1-PSMG2 heterodimer which promotes 20S proteasome assembly.

Its subcellular location is the cytoplasm. The protein localises to the nucleus. In terms of biological role, component of the 20S core proteasome complex involved in the proteolytic degradation of most intracellular proteins. This complex plays numerous essential roles within the cell by associating with different regulatory particles. Associated with two 19S regulatory particles, forms the 26S proteasome and thus participates in the ATP-dependent degradation of ubiquitinated proteins. The 26S proteasome plays a key role in the maintenance of protein homeostasis by removing misfolded or damaged proteins that could impair cellular functions, and by removing proteins whose functions are no longer required. Associated with the PA200 or PA28, the 20S proteasome mediates ubiquitin-independent protein degradation. This type of proteolysis is required in several pathways including spermatogenesis (20S-PA200 complex) or generation of a subset of MHC class I-presented antigenic peptides (20S-PA28 complex). The sequence is that of Proteasome subunit alpha type-5 (PSMA5) from Bos taurus (Bovine).